The primary structure comprises 206 residues: Small ribosomal subunit protein uS4 (206 aa).

Residues 96-156 enclose the S4 RNA-binding domain; it reads GRLDNVVYRM…EKSKKQARIK (61 aa).

It belongs to the universal ribosomal protein uS4 family. Part of the 30S ribosomal subunit. Contacts protein S5. The interaction surface between S4 and S5 is involved in control of translational fidelity.

In terms of biological role, one of the primary rRNA binding proteins, it binds directly to 16S rRNA where it nucleates assembly of the body of the 30S subunit. Its function is as follows. With S5 and S12 plays an important role in translational accuracy. The protein is Small ribosomal subunit protein uS4 of Histophilus somni (strain 129Pt) (Haemophilus somnus).